The chain runs to 440 residues: Ribosomal protein uS12 methylthiotransferase RimO (440 aa).

Residues proline 5–glutamine 116 form the MTTase N-terminal domain. [4Fe-4S] cluster is bound by residues cysteine 14, cysteine 50, cysteine 79, cysteine 154, cysteine 158, and cysteine 161. In terms of domain architecture, Radical SAM core spans threonine 140–lysine 370. The region spanning glutamine 372–serine 438 is the TRAM domain.

Belongs to the methylthiotransferase family. RimO subfamily. The cofactor is [4Fe-4S] cluster.

The protein resides in the cytoplasm. The catalysed reaction is L-aspartate(89)-[ribosomal protein uS12]-hydrogen + (sulfur carrier)-SH + AH2 + 2 S-adenosyl-L-methionine = 3-methylsulfanyl-L-aspartate(89)-[ribosomal protein uS12]-hydrogen + (sulfur carrier)-H + 5'-deoxyadenosine + L-methionine + A + S-adenosyl-L-homocysteine + 2 H(+). Its function is as follows. Catalyzes the methylthiolation of an aspartic acid residue of ribosomal protein uS12. In Nostoc sp. (strain PCC 7120 / SAG 25.82 / UTEX 2576), this protein is Ribosomal protein uS12 methylthiotransferase RimO.